The following is a 47-amino-acid chain: Capistruin (47 aa).

A propeptide spanning residues 1 to 28 (MVRLLAKLLRSTIHGSNGVSLDAVSSTH) is cleaved from the precursor. The isoaspartyl glycine isopeptide (Gly-Asp) cross-link spans 29–37 (GTPGFQTPD).

Post-translationally, it is assumed that the two processing enzymes CapB/CapC convert the precursor protein CapA into the mature lasso peptide capistruin. CapB is assumed to cleave the precursor protein CapA and to set an N-terminal Gly free, whose a-NH2 group acts as the nucleophile in the subsequent cyclization reaction. CapC is most likely involved in the side-chain carboxyl group activation of aspartic acid at position 9 generating the electrophile for the condensation reaction. CapD may export capistruin outside of the producing cells.

The protein resides in the secreted. Peptide antibiotic that functions through inhibition of the bacterial DNA-dependent RNA polymerase (RNAP). Inhibits transcription by binding in RNAP secondary channel, where it sterically blocks the folding of the trigger loop, which is essential for efficient catalysis. In contrast to MccJ25, does not restrict access of nucleotide substrates to the catalytic center and shows a non-competitive mode of inhibition. Shows activity against closely related Gram-negative Burkholderia and Pseudomonas strains. Is not active against Gram-positive bacteria. This chain is Capistruin, found in Burkholderia thailandensis (strain ATCC 700388 / DSM 13276 / CCUG 48851 / CIP 106301 / E264).